A 170-amino-acid chain; its full sequence is Group 2 truncated hemoglobin 3-1 (170 aa).

H98 lines the heme b pocket.

This sequence belongs to the truncated hemoglobin family. Group II subfamily. Homodimer when ferric.

Its function is as follows. Hemoglobin-like protein that exhibits an unusual concentration-independent binding of O(2) and CO. Required for general plant development and during nodulation. May promote shoot organogenesis from root explants. This Medicago truncatula (Barrel medic) protein is Group 2 truncated hemoglobin 3-1.